Here is a 265-residue protein sequence, read N- to C-terminus: Cytochrome c oxidase subunit 3 (265 aa).

The next 6 membrane-spanning stretches (helical) occupy residues 16 to 36 (PWPF…ILWL), 40 to 60 (PSFL…FSWW), 83 to 103 (CVAL…WTFF), 159 to 179 (VGPF…FLVQ), 198 to 218 (VFYL…IWLM), and 241 to 261 (IWYW…VYVW).

This sequence belongs to the cytochrome c oxidase subunit 3 family. As to quaternary structure, component of the cytochrome c oxidase (complex IV, CIV), a multisubunit enzyme composed of a catalytic core of 3 subunits and several supernumerary subunits. The complex exists as a monomer or a dimer and forms supercomplexes (SCs) in the inner mitochondrial membrane with ubiquinol-cytochrome c oxidoreductase (cytochrome b-c1 complex, complex III, CIII).

It is found in the mitochondrion inner membrane. The catalysed reaction is 4 Fe(II)-[cytochrome c] + O2 + 8 H(+)(in) = 4 Fe(III)-[cytochrome c] + 2 H2O + 4 H(+)(out). Functionally, component of the cytochrome c oxidase, the last enzyme in the mitochondrial electron transport chain which drives oxidative phosphorylation. The respiratory chain contains 3 multisubunit complexes succinate dehydrogenase (complex II, CII), ubiquinol-cytochrome c oxidoreductase (cytochrome b-c1 complex, complex III, CIII) and cytochrome c oxidase (complex IV, CIV), that cooperate to transfer electrons derived from NADH and succinate to molecular oxygen, creating an electrochemical gradient over the inner membrane that drives transmembrane transport and the ATP synthase. Cytochrome c oxidase is the component of the respiratory chain that catalyzes the reduction of oxygen to water. Electrons originating from reduced cytochrome c in the intermembrane space (IMS) are transferred via the dinuclear copper A center (CU(A)) of subunit 2 and heme A of subunit 1 to the active site in subunit 1, a binuclear center (BNC) formed by heme A3 and copper B (CU(B)). The BNC reduces molecular oxygen to 2 water molecules using 4 electrons from cytochrome c in the IMS and 4 protons from the mitochondrial matrix. The polypeptide is Cytochrome c oxidase subunit 3 (COIII) (Mytilus edulis (Blue mussel)).